Reading from the N-terminus, the 52-residue chain is Eukaryotic translation initiation factor 5A (52 aa).

Residue lysine 42 is modified to Hypusine.

Belongs to the eIF-5A family. In terms of processing, lys-42 undergoes hypusination, a unique post-translational modification that consists in the addition of a butylamino group from spermidine to lysine side chain, leading to the formation of the unusual amino acid hypusine. eIF-5As are the only known proteins to undergo this modification, which is essential for their function.

The protein localises to the cytoplasm. Its function is as follows. Translation factor that promotes translation elongation and termination, particularly upon ribosome stalling at specific amino acid sequence contexts. Binds between the exit (E) and peptidyl (P) site of the ribosome and promotes rescue of stalled ribosome: specifically required for efficient translation of polyproline-containing peptides as well as other motifs that stall the ribosome. Acts as a ribosome quality control (RQC) cofactor by joining the RQC complex to facilitate peptidyl transfer during CAT tailing step. This chain is Eukaryotic translation initiation factor 5A, found in Schistosoma mansoni (Blood fluke).